The following is a 59-amino-acid chain: UPF0434 protein plu1633 (59 aa).

Belongs to the UPF0434 family.

This Photorhabdus laumondii subsp. laumondii (strain DSM 15139 / CIP 105565 / TT01) (Photorhabdus luminescens subsp. laumondii) protein is UPF0434 protein plu1633.